The following is a 274-amino-acid chain: Diaminopimelate epimerase (274 aa).

Asparagine 11, glutamine 44, and asparagine 64 together coordinate substrate. Catalysis depends on cysteine 73, which acts as the Proton donor. Substrate contacts are provided by residues 74–75, asparagine 157, asparagine 190, and 208–209; these read GN and ER. The active-site Proton acceptor is cysteine 217. Residue 218-219 coordinates substrate; the sequence is GS.

The protein belongs to the diaminopimelate epimerase family. In terms of assembly, homodimer.

It is found in the cytoplasm. It catalyses the reaction (2S,6S)-2,6-diaminopimelate = meso-2,6-diaminopimelate. Its pathway is amino-acid biosynthesis; L-lysine biosynthesis via DAP pathway; DL-2,6-diaminopimelate from LL-2,6-diaminopimelate: step 1/1. Its function is as follows. Catalyzes the stereoinversion of LL-2,6-diaminopimelate (L,L-DAP) to meso-diaminopimelate (meso-DAP), a precursor of L-lysine and an essential component of the bacterial peptidoglycan. The protein is Diaminopimelate epimerase of Haemophilus influenzae (strain PittEE).